We begin with the raw amino-acid sequence, 367 residues long: Protein RecA (367 aa).

Residues 1-14 (MSTEVNANQSPNAE) show a composition bias toward polar residues. The disordered stretch occupies residues 1 to 24 (MSTEVNANQSPNAESRQEAARSGE). The segment covering 15 to 24 (SRQEAARSGE) has biased composition (basic and acidic residues). An ATP-binding site is contributed by 84–91 (GPESSGKT). The interval 348–367 (GSEVSSNSMRPLTTANRKAA) is disordered. Residues 349–367 (SEVSSNSMRPLTTANRKAA) are compositionally biased toward polar residues.

Belongs to the RecA family.

The protein localises to the cytoplasm. Functionally, can catalyze the hydrolysis of ATP in the presence of single-stranded DNA, the ATP-dependent uptake of single-stranded DNA by duplex DNA, and the ATP-dependent hybridization of homologous single-stranded DNAs. It interacts with LexA causing its activation and leading to its autocatalytic cleavage. The polypeptide is Protein RecA (Prochlorococcus marinus (strain MIT 9211)).